A 448-amino-acid chain; its full sequence is Probable glycine dehydrogenase (decarboxylating) subunit 1 (448 aa).

This sequence belongs to the GcvP family. N-terminal subunit subfamily. The glycine cleavage system is composed of four proteins: P, T, L and H. In this organism, the P 'protein' is a heterodimer of two subunits.

The enzyme catalyses N(6)-[(R)-lipoyl]-L-lysyl-[glycine-cleavage complex H protein] + glycine + H(+) = N(6)-[(R)-S(8)-aminomethyldihydrolipoyl]-L-lysyl-[glycine-cleavage complex H protein] + CO2. The glycine cleavage system catalyzes the degradation of glycine. The P protein binds the alpha-amino group of glycine through its pyridoxal phosphate cofactor; CO(2) is released and the remaining methylamine moiety is then transferred to the lipoamide cofactor of the H protein. This is Probable glycine dehydrogenase (decarboxylating) subunit 1 from Anoxybacillus flavithermus (strain DSM 21510 / WK1).